The following is a 382-amino-acid chain: UDP-4-amino-4-deoxy-L-arabinose--oxoglutarate aminotransferase (382 aa).

Lys-183 carries the post-translational modification N6-(pyridoxal phosphate)lysine.

The protein belongs to the DegT/DnrJ/EryC1 family. ArnB subfamily. As to quaternary structure, homodimer. It depends on pyridoxal 5'-phosphate as a cofactor.

It catalyses the reaction UDP-4-amino-4-deoxy-beta-L-arabinose + 2-oxoglutarate = UDP-beta-L-threo-pentopyranos-4-ulose + L-glutamate. Its pathway is nucleotide-sugar biosynthesis; UDP-4-deoxy-4-formamido-beta-L-arabinose biosynthesis; UDP-4-deoxy-4-formamido-beta-L-arabinose from UDP-alpha-D-glucuronate: step 2/3. It participates in bacterial outer membrane biogenesis; lipopolysaccharide biosynthesis. Its function is as follows. Catalyzes the conversion of UDP-4-keto-arabinose (UDP-Ara4O) to UDP-4-amino-4-deoxy-L-arabinose (UDP-L-Ara4N). The modified arabinose is attached to lipid A and is required for resistance to polymyxin and cationic antimicrobial peptides. The chain is UDP-4-amino-4-deoxy-L-arabinose--oxoglutarate aminotransferase from Pseudomonas aeruginosa (strain LESB58).